Consider the following 118-residue polypeptide: UPF0342 protein ABC1519 (118 aa).

Belongs to the UPF0342 family.

This is UPF0342 protein ABC1519 from Shouchella clausii (strain KSM-K16) (Alkalihalobacillus clausii).